Consider the following 162-residue polypeptide: Interleukin-15 (162 aa).

The N-terminal stretch at 1-29 (MRILKPYLRSTSIQCYLCLLLNSHFLTEA) is a signal peptide. Residues 30–48 (GIHVFILGCISAGLPKTEA) constitute a propeptide that is removed on maturation. Disulfide bonds link Cys83–Cys133 and Cys90–Cys136. N-linked (GlcNAc...) asparagine glycosylation is found at Asn113, Asn121, and Asn127.

Belongs to the IL-15/IL-21 family.

It is found in the secreted. Cytokine that plays a major role in the development of inflammatory and protective immune responses to microbial invaders and parasites by modulating immune cells of both the innate and adaptive immune systems. Stimulates the proliferation of natural killer cells, T-cells and B-cells and promotes the secretion of several cytokines. In monocytes, induces the production of IL8 and monocyte chemotactic protein 1/CCL2, two chemokines that attract neutrophils and monocytes respectively to sites of infection. Unlike most cytokines, which are secreted in soluble form, IL15 is expressed in association with its high affinity IL15RA on the surface of IL15-producing cells and delivers signals to target cells that express IL2RB and IL2RG receptor subunits. Binding to its receptor triggers the phosphorylation of JAK1 and JAK3 and the recruitment and subsequent phosphorylation of signal transducer and activator of transcription-3/STAT3 and STAT5. In mast cells, induces the rapid tyrosine phosphorylation of STAT6 and thereby controls mast cell survival and release of cytokines such as IL4. This Bubalus bubalis (Domestic water buffalo) protein is Interleukin-15 (IL15).